Reading from the N-terminus, the 198-residue chain is Probable GTP-binding protein EngB (198 aa).

The 172-residue stretch at Asp-27–Leu-198 folds into the EngB-type G domain. GTP is bound by residues Gly-35 to Ser-42, Gly-62 to Leu-66, Asp-80 to Gly-83, Thr-147 to Asp-150, and Phe-179 to Ser-181. Ser-42 and Thr-64 together coordinate Mg(2+).

The protein belongs to the TRAFAC class TrmE-Era-EngA-EngB-Septin-like GTPase superfamily. EngB GTPase family. Mg(2+) serves as cofactor.

Functionally, necessary for normal cell division and for the maintenance of normal septation. This is Probable GTP-binding protein EngB from Streptococcus agalactiae serotype Ia (strain ATCC 27591 / A909 / CDC SS700).